The chain runs to 334 residues: Protein RecA (334 aa).

65–72 contributes to the ATP binding site; the sequence is GNESSGKT.

It belongs to the RecA family.

The protein localises to the cytoplasm. Can catalyze the hydrolysis of ATP in the presence of single-stranded DNA, the ATP-dependent uptake of single-stranded DNA by duplex DNA, and the ATP-dependent hybridization of homologous single-stranded DNAs. It interacts with LexA causing its activation and leading to its autocatalytic cleavage. This Ureaplasma parvum serovar 3 (strain ATCC 27815 / 27 / NCTC 11736) protein is Protein RecA.